The chain runs to 115 residues: MTRNWSFRVIFVSAMWCALLKFATLEAPKDDFEYDGGCPFVVLDNGTHVKPAGCSHLCNGAPETLDNIECYNVTEEVAKRMTPGIPYACWLGWCSKGECKRDNRTEVCYRGSEEE.

A signal peptide spans 1–25; it reads MTRNWSFRVIFVSAMWCALLKFATL. 4 disulfide bridges follow: cysteine 38-cysteine 58, cysteine 54-cysteine 94, cysteine 70-cysteine 99, and cysteine 89-cysteine 108. 3 N-linked (GlcNAc...) asparagine glycosylation sites follow: asparagine 45, asparagine 72, and asparagine 103.

Its subcellular location is the secreted. Salivary chemokine-binding protein which binds to host chemokine CCL2. The sequence is that of Evasin P1183 from Amblyomma triste (Neotropical tick).